A 188-amino-acid polypeptide reads, in one-letter code: MLSEFFNSLASFFSNIFSLFEGKKDTRILMIGLDGAGKSTLLFKLKLGDVVLTIPTIGFNVETIVYKNLSMTVWDVGGQHKIRALWKHYYHGTNAIIFVVDSTDRERMDEVKEEIDNLLIQDELKGIQILVLANKQDMNNAMNTAEIVNSLNLNSIKDRKWYVQPCSAIRSDGIYEGFDWVANSLNNK.

Residues 34 to 40, 75 to 79, and 134 to 137 contribute to the GTP site; these read DGAGKST, DVGGQ, and NKQD.

Belongs to the small GTPase superfamily. Arf family.

Its subcellular location is the golgi apparatus. Functionally, GTP-binding protein that may be involved in protein trafficking. May modulate vesicle budding and uncoating within the Golgi apparatus. In Dictyostelium discoideum (Social amoeba), this protein is ADP-ribosylation factor K (arrK).